The chain runs to 394 residues: Envelope glycoprotein D (394 aa).

A signal peptide spans 1–25; it reads MGGTAARLGAVILFVVIVGLHGVRG. An interaction with TNFRSF14 region spans residues 25–57; it reads GKYALADASLKMADPNRFRGKDLPVLDQLTDPP. Over 26–339 the chain is Virion surface; the sequence is KYALADASLK…PYHPPATPNN (314 aa). His64 is a Zn(2+) binding site. 3 disulfide bridges follow: Cys91-Cys214, Cys131-Cys227, and Cys143-Cys152. Residues Asn119 and Asn146 are each glycosylated (N-linked (GlcNAc...) asparagine; by host). Asp240 lines the Zn(2+) pocket. The interval 261 to 305 is profusion; it reads LKIAGWHGPKAPYTSTLLPPELSETPNATQPELAPEDPEDSALLE. The segment at 275-301 is disordered; that stretch reads STLLPPELSETPNATQPELAPEDPEDS. N-linked (GlcNAc...) asparagine; by host glycosylation occurs at Asn287. The chain crosses the membrane as a helical span at residues 340 to 364; it reads MGLIAGAVGGSLLAALVICGIVYWM. The Intravirion segment spans residues 365–394; sequence HRRTRKAPKRIRLPHIREDDQPSSHQPLFY.

This sequence belongs to the herpesviridae glycoprotein D family. As to quaternary structure, homodimer. Interacts with host receptor TNFRSF14. Interacts with host receptor NECTIN1. Interacts (via profusion domain) with gB; this interaction occurs in the absence of gH/gL. Interacts (via profusion domain) with gH/gL heterodimer; this interaction occurs in the absence of gB. Associates with the gB-gH/gL-gD complex. Interacts (via C-terminus) with UL11 tegument protein. Interacts with host RSAD2.

Its subcellular location is the virion membrane. It is found in the host Golgi apparatus. Envelope glycoprotein that binds to the host cell entry receptors NECTIN1, TNFRSF14/HVEM and 3-O-sulfated heparan sulfate, promoting the virus entry into host cells. May trigger fusion with host membrane, by recruiting the fusion machinery composed of gB and gH/gL. The polypeptide is Envelope glycoprotein D (gD) (Human herpesvirus 1 (strain Patton) (HHV-1)).